The chain runs to 192 residues: MVRMFWLLTTFAYLLGSLSFAILLSRLSGRPDPRASGSGNAGATNMLRLAGKKLAILTLLGDLCKGLVPILIASTLSMDIAQQGWIGVCAVLGHLFPVYFRFRGGKGVATAAGVLLGLYPPAAALAIVAWLLTLYLTRTSSLAALIATPLTLPLLAWQEPHALLPMSVLTLLIVWRHRGNLRDLLAGRERHF.

Helical transmembrane passes span 4–24 (MFWLLTTFAYLLGSLSFAILL), 54–74 (LAILTLLGDLCKGLVPILIAS), 80–100 (IAQQGWIGVCAVLGHLFPVYF), 112–132 (AGVLLGLYPPAAALAIVAWLL), and 154–174 (LLAWQEPHALLPMSVLTLLIV).

This sequence belongs to the PlsY family. Probably interacts with PlsX.

The protein localises to the cell inner membrane. It carries out the reaction an acyl phosphate + sn-glycerol 3-phosphate = a 1-acyl-sn-glycero-3-phosphate + phosphate. It participates in lipid metabolism; phospholipid metabolism. Functionally, catalyzes the transfer of an acyl group from acyl-phosphate (acyl-PO(4)) to glycerol-3-phosphate (G3P) to form lysophosphatidic acid (LPA). This enzyme utilizes acyl-phosphate as fatty acyl donor, but not acyl-CoA or acyl-ACP. This Pseudomonas syringae pv. syringae (strain B728a) protein is Glycerol-3-phosphate acyltransferase.